We begin with the raw amino-acid sequence, 357 residues long: Histidinol-phosphate aminotransferase (357 aa).

The residue at position 212 (Lys-212) is an N6-(pyridoxal phosphate)lysine.

This sequence belongs to the class-II pyridoxal-phosphate-dependent aminotransferase family. Histidinol-phosphate aminotransferase subfamily. As to quaternary structure, homodimer. It depends on pyridoxal 5'-phosphate as a cofactor.

The catalysed reaction is L-histidinol phosphate + 2-oxoglutarate = 3-(imidazol-4-yl)-2-oxopropyl phosphate + L-glutamate. The protein operates within amino-acid biosynthesis; L-histidine biosynthesis; L-histidine from 5-phospho-alpha-D-ribose 1-diphosphate: step 7/9. This is Histidinol-phosphate aminotransferase from Pectobacterium atrosepticum (strain SCRI 1043 / ATCC BAA-672) (Erwinia carotovora subsp. atroseptica).